Reading from the N-terminus, the 1733-residue chain is Collagen alpha-1(XXIV) chain (1733 aa).

The signal sequence occupies residues 1 to 35 (MHLGAYRTRHGKVSPTTETKLFLRFIVLCVVWISV). One can recognise a Laminin G-like domain in the interval 102–229 (ISLRQPLTVL…TVCQLEIMPS (128 aa)). N-linked (GlcNAc...) asparagine glycosylation occurs at asparagine 157. The interval 257-335 (PHTAGMPTRH…SQEHQTPRAQ (79 aa)) is disordered. The segment covering 312–324 (IPNNRSNGSATVH) has biased composition (polar residues). N-linked (GlcNAc...) asparagine glycosylation is found at asparagine 366, asparagine 396, and asparagine 448. A disordered region spans residues 505-1499 (YLRGPKGDPG…GPPGAPGPRR (995 aa)). Collagen-like domains follow at residues 506 to 561 (LRGP…PGLS), 577 to 636 (GLVG…KGVR), 679 to 738 (GPAG…KGEQ), 742 to 801 (GEPG…PGQN), 802 to 861 (GPEG…KGEV), 886 to 945 (GSIG…KGQR), 946 to 1005 (GPRG…SGDV), 1006 to 1065 (GPAG…PGPR), 1072 to 1131 (GEEG…PGQR), 1135 to 1189 (GKKG…GIPG), 1191 to 1215 (RGHQ…PGED), 1220 to 1279 (GPPG…KGER), 1316 to 1375 (GVDG…KGEQ), 1376 to 1435 (GLPG…AGIV), and 1439 to 1498 (GPKG…PGPR). The segment covering 512 to 524 (DPGPPGPPGPMGI) has biased composition (pro residues). Low complexity-rich tracts occupy residues 573–599 (PGLL…LPGL) and 699–708 (PGVTGSVGPA). Residues 776-789 (DPGPQGPSGPPGPE) are compositionally biased toward pro residues. A compositionally biased stretch (pro residues) spans 912–921 (PGPPGAPGPM). Residues 923–944 (PLGLPGLVGARGAPGSPGPKGQ) show a composition bias toward low complexity. Residues 1045–1054 (GAKGDGGPAG) show a composition bias toward gly residues. Low complexity predominate over residues 1056 to 1074 (AGATGEPGPRGEPGAPGEE). Over residues 1084 to 1093 (GAPGGSGLPG) the composition is skewed to gly residues. Residues 1175–1205 (PLGLMGPEGEPGIPGYRGHQGQPGPSGLPGP) show a composition bias toward low complexity. Positions 1237–1246 (TGEHGEEGYK) are enriched in basic and acidic residues. A compositionally biased stretch (low complexity) spans 1323–1339 (YPGKPGLPGKQGLLGVP). The span at 1352–1361 (GPQGGKGASG) shows a compositional bias: gly residues. Low complexity-rich tracts occupy residues 1371–1386 (PKGE…VPGQ) and 1434–1444 (IVGIVGPKGPI). Pro residues predominate over residues 1485 to 1495 (QPGPPGPPGAP). Residues 1534–1733 (SDIFKTLTYL…YIESNSVCFL (200 aa)) form the Fibrillar collagen NC1 domain.

It belongs to the fibrillar collagen family. In terms of tissue distribution, expressed in skeleton. Found at ossification centers of the craniofacial, axial and appendicular skeleton. Also expressed in retina and to a lower extent in cornea, skin and tendon.

The protein resides in the secreted. The protein localises to the extracellular space. Its subcellular location is the extracellular matrix. In terms of biological role, involved in osteoblast differentiation. The chain is Collagen alpha-1(XXIV) chain (Col24a1) from Mus musculus (Mouse).